Consider the following 254-residue polypeptide: D-aminoacyl-tRNA deacylase (254 aa).

Positions 61 to 82 are disordered; that stretch reads KPTLTVHTPGNLTDDNSHGGNP. The segment covering 65 to 74 has biased composition (polar residues); the sequence is TVHTPGNLTD.

It belongs to the DtdA deacylase family. In terms of assembly, monomer. The cofactor is Zn(2+).

The enzyme catalyses a D-aminoacyl-tRNA + H2O = a tRNA + a D-alpha-amino acid + H(+). It catalyses the reaction glycyl-tRNA(Ala) + H2O = tRNA(Ala) + glycine + H(+). Its function is as follows. D-aminoacyl-tRNA deacylase with broad substrate specificity. By recycling D-aminoacyl-tRNA to D-amino acids and free tRNA molecules, this enzyme counteracts the toxicity associated with the formation of D-aminoacyl-tRNA entities in vivo. The polypeptide is D-aminoacyl-tRNA deacylase (Methanococcus maripaludis (strain DSM 14266 / JCM 13030 / NBRC 101832 / S2 / LL)).